We begin with the raw amino-acid sequence, 147 residues long: 3-dehydroquinate dehydratase (147 aa).

Catalysis depends on tyrosine 23, which acts as the Proton acceptor. 3 residues coordinate substrate: asparagine 74, histidine 80, and aspartate 87. The Proton donor role is filled by histidine 100. Substrate-binding positions include 101 to 102 and arginine 111; that span reads IS.

This sequence belongs to the type-II 3-dehydroquinase family. As to quaternary structure, homododecamer.

The catalysed reaction is 3-dehydroquinate = 3-dehydroshikimate + H2O. It functions in the pathway metabolic intermediate biosynthesis; chorismate biosynthesis; chorismate from D-erythrose 4-phosphate and phosphoenolpyruvate: step 3/7. Catalyzes a trans-dehydration via an enolate intermediate. This is 3-dehydroquinate dehydratase from Bacillus pumilus (strain SAFR-032).